The following is a 202-amino-acid chain: Small ribosomal subunit protein uS4 (202 aa).

The interval 15-42 (LGDLPGLTRKAAKRSYPPGQHGQARRKR) is disordered. The S4 RNA-binding domain maps to 90–152 (NRLDNVCFRI…KCSKLLAEAN (63 aa)).

Belongs to the universal ribosomal protein uS4 family. In terms of assembly, part of the 30S ribosomal subunit. Contacts protein S5. The interaction surface between S4 and S5 is involved in control of translational fidelity.

Its function is as follows. One of the primary rRNA binding proteins, it binds directly to 16S rRNA where it nucleates assembly of the body of the 30S subunit. Functionally, with S5 and S12 plays an important role in translational accuracy. This Synechococcus sp. (strain CC9311) protein is Small ribosomal subunit protein uS4.